A 380-amino-acid chain; its full sequence is High affinity transport system protein p37 (380 aa).

The signal sequence occupies residues 1-26 (MLKRKKLLQGFLKFLPLIIPATIFVS). A lipid anchor (N-palmitoyl cysteine) is attached at Cys27. Residue Cys27 is the site of S-diacylglycerol cysteine attachment. A disordered region spans residues 285 to 304 (NHFYTPTENNGKGDSEKSNN).

The protein localises to the cell membrane. P37 is part of a high-affinity transport system. The sequence is that of High affinity transport system protein p37 (p37) from Mycoplasma pneumoniae (strain ATCC 29342 / M129 / Subtype 1) (Mycoplasmoides pneumoniae).